The primary structure comprises 557 residues: Formate--tetrahydrofolate ligase (557 aa).

66 to 73 contacts ATP; sequence TPAGEGKS.

It belongs to the formate--tetrahydrofolate ligase family.

It carries out the reaction (6S)-5,6,7,8-tetrahydrofolate + formate + ATP = (6R)-10-formyltetrahydrofolate + ADP + phosphate. The protein operates within one-carbon metabolism; tetrahydrofolate interconversion. The sequence is that of Formate--tetrahydrofolate ligase from Clostridium botulinum (strain Loch Maree / Type A3).